We begin with the raw amino-acid sequence, 348 residues long: F(420)H(2) dehydrogenase subunit H (348 aa).

8 helical membrane-spanning segments follow: residues 20-40 (GVVG…AVWL), 93-113 (IFMM…AVFI), 127-147 (ISVL…FMIA), 172-192 (PLGI…IVEI), 198-218 (LLWN…ALMA), 259-279 (ILGS…PAFV), 286-306 (GLIA…MTII), and 328-348 (LLPL…YLGA).

The protein belongs to the complex I subunit 1 family. As to quaternary structure, the FPO complex is composed of at least 13 different subunits. FpoA, FpoH, FpoJ, FpoK, FpoL, FpoM and FpoN proteins constitute the membrane sector of the complex.

It localises to the cell membrane. The catalysed reaction is methanophenazine + reduced coenzyme F420-(gamma-L-Glu)(n) = dihydromethanophenazine + oxidized coenzyme F420-(gamma-L-Glu)(n) + H(+). Functionally, component of the F(420)H(2) dehydrogenase (FPO complex) which is part of the energy-conserving F(420)H(2):heterodisulfide oxidoreductase system. The membrane-bound electron transfer system of the complex plays an important role in the metabolism of methylotrophic methanogens when the organisms grow on methanol or methylamines. Catalyzes the oxidation of methanophenazine to dihydromethanophenazine. It shuttles electrons from F(420)H(2), via FAD and iron-sulfur (Fe-S) centers, to methanophenazine (an electron carrier in the membrane). It couples the redox reaction to proton translocation (for every two electrons transferred, two hydrogen ions are translocated across the cytoplasmic membrane), and thus conserves the redox energy in a proton gradient. In Methanosarcina acetivorans (strain ATCC 35395 / DSM 2834 / JCM 12185 / C2A), this protein is F(420)H(2) dehydrogenase subunit H.